The chain runs to 697 residues: Elongation factor G (697 aa).

In terms of domain architecture, tr-type G spans Glu-8 to Leu-282. GTP is bound by residues Ala-17–Thr-24, Asp-81–His-85, and Asn-135–Asp-138.

Belongs to the TRAFAC class translation factor GTPase superfamily. Classic translation factor GTPase family. EF-G/EF-2 subfamily.

The protein localises to the cytoplasm. Catalyzes the GTP-dependent ribosomal translocation step during translation elongation. During this step, the ribosome changes from the pre-translocational (PRE) to the post-translocational (POST) state as the newly formed A-site-bound peptidyl-tRNA and P-site-bound deacylated tRNA move to the P and E sites, respectively. Catalyzes the coordinated movement of the two tRNA molecules, the mRNA and conformational changes in the ribosome. The protein is Elongation factor G of Metamycoplasma arthritidis (strain 158L3-1) (Mycoplasma arthritidis).